We begin with the raw amino-acid sequence, 283 residues long: 2,3,4,5-tetrahydropyridine-2,6-dicarboxylate N-succinyltransferase (283 aa).

2 residues coordinate substrate: Arg-107 and Asp-144.

This sequence belongs to the transferase hexapeptide repeat family. As to quaternary structure, homotrimer.

The protein localises to the cytoplasm. It carries out the reaction (S)-2,3,4,5-tetrahydrodipicolinate + succinyl-CoA + H2O = (S)-2-succinylamino-6-oxoheptanedioate + CoA. The protein operates within amino-acid biosynthesis; L-lysine biosynthesis via DAP pathway; LL-2,6-diaminopimelate from (S)-tetrahydrodipicolinate (succinylase route): step 1/3. This chain is 2,3,4,5-tetrahydropyridine-2,6-dicarboxylate N-succinyltransferase, found in Rhodospirillum rubrum (strain ATCC 11170 / ATH 1.1.1 / DSM 467 / LMG 4362 / NCIMB 8255 / S1).